Here is a 21-residue protein sequence, read N- to C-terminus: Alpha-aminoadipic semialdehyde dehydrogenase (21 aa).

It belongs to the aldehyde dehydrogenase family. In terms of assembly, homotetramer.

The enzyme catalyses (S)-2-amino-6-oxohexanoate + NADP(+) + H2O = L-2-aminoadipate + NADPH + 2 H(+). It catalyses the reaction (S)-2-amino-6-oxohexanoate + NAD(+) + H2O = L-2-aminoadipate + NADH + 2 H(+). This Ctenopharyngodon idella (Grass carp) protein is Alpha-aminoadipic semialdehyde dehydrogenase (aldh7a1).